A 683-amino-acid polypeptide reads, in one-letter code: DNA-directed RNA polymerase subunit beta' (683 aa).

Zn(2+) is bound by residues Cys-69, Cys-71, Cys-87, and Cys-90. Positions 489, 491, and 493 each coordinate Mg(2+).

The protein belongs to the RNA polymerase beta' chain family. RpoC1 subfamily. In plastids the minimal PEP RNA polymerase catalytic core is composed of four subunits: alpha, beta, beta', and beta''. When a (nuclear-encoded) sigma factor is associated with the core the holoenzyme is formed, which can initiate transcription. Mg(2+) is required as a cofactor. Zn(2+) serves as cofactor.

It is found in the plastid. The protein localises to the chloroplast. The enzyme catalyses RNA(n) + a ribonucleoside 5'-triphosphate = RNA(n+1) + diphosphate. DNA-dependent RNA polymerase catalyzes the transcription of DNA into RNA using the four ribonucleoside triphosphates as substrates. In Zea mays (Maize), this protein is DNA-directed RNA polymerase subunit beta'.